A 340-amino-acid polypeptide reads, in one-letter code: Aspartate-semialdehyde dehydrogenase (340 aa).

NADP(+)-binding positions include 11-14 and 39-40; these read TGEV and RS. R100 is a binding site for phosphate. C131 (acyl-thioester intermediate) is an active-site residue. Q158 provides a ligand contact to substrate. Position 161-162 (161-162) interacts with NADP(+); that stretch reads SG. K216 lines the phosphate pocket. Residue R238 participates in substrate binding. H245 functions as the Proton acceptor in the catalytic mechanism. N318 is an NADP(+) binding site.

The protein belongs to the aspartate-semialdehyde dehydrogenase family. In terms of assembly, homodimer.

The catalysed reaction is L-aspartate 4-semialdehyde + phosphate + NADP(+) = 4-phospho-L-aspartate + NADPH + H(+). The protein operates within amino-acid biosynthesis; L-lysine biosynthesis via DAP pathway; (S)-tetrahydrodipicolinate from L-aspartate: step 2/4. Its pathway is amino-acid biosynthesis; L-methionine biosynthesis via de novo pathway; L-homoserine from L-aspartate: step 2/3. It participates in amino-acid biosynthesis; L-threonine biosynthesis; L-threonine from L-aspartate: step 2/5. Functionally, catalyzes the NADPH-dependent formation of L-aspartate-semialdehyde (L-ASA) by the reductive dephosphorylation of L-aspartyl-4-phosphate. The protein is Aspartate-semialdehyde dehydrogenase of Aquifex aeolicus (strain VF5).